The chain runs to 327 residues: Zinc transport protein ZntB (327 aa).

The Cytoplasmic portion of the chain corresponds to 1-273 (MEAIKGADVN…ARRTYTMSLM (273 aa)). The helical transmembrane segment at 274–294 (AMVFLPSTFLTGLFGVNLGGI) threads the bilayer. Residues 295-300 (PGGGWR) are Periplasmic-facing. Residues 301-321 (FGFSLFCILLVVLIGGVALWL) form a helical membrane-spanning segment. Topologically, residues 322-327 (HRSKWL) are cytoplasmic.

This sequence belongs to the CorA metal ion transporter (MIT) (TC 1.A.35) family.

Its subcellular location is the cell inner membrane. The catalysed reaction is Zn(2+)(out) + H(+)(out) = Zn(2+)(in) + H(+)(in). In terms of biological role, zinc transporter. Acts as a Zn(2+):proton symporter, which likely mediates zinc ion uptake. The sequence is that of Zinc transport protein ZntB from Escherichia fergusonii (strain ATCC 35469 / DSM 13698 / CCUG 18766 / IAM 14443 / JCM 21226 / LMG 7866 / NBRC 102419 / NCTC 12128 / CDC 0568-73).